The following is a 482-amino-acid chain: Cytochrome c-552 (482 aa).

A signal peptide spans 1-26 (MIKVSNALQRILIGAALALFGGGAQA). Residue His98 coordinates heme c. Heme contacts are provided by Cys126, Cys129, and Lys130. Heme c-binding residues include Cys164, Cys167, His168, Cys213, Cys216, and His217. Ca(2+)-binding residues include Glu219, Tyr220, Lys265, and Gln267. Tyr220 contributes to the substrate binding site. His268 is a substrate binding site. Heme c contacts are provided by His279, Cys286, Cys289, His290, His305, Cys318, Cys321, His322, and His397.

This sequence belongs to the cytochrome c-552 family. The cofactor is Ca(2+). It depends on heme c as a cofactor.

Its subcellular location is the periplasm. The enzyme catalyses 6 Fe(III)-[cytochrome c] + NH4(+) + 2 H2O = 6 Fe(II)-[cytochrome c] + nitrite + 8 H(+). Its pathway is nitrogen metabolism; nitrate reduction (assimilation). In terms of biological role, catalyzes the reduction of nitrite to ammonia, consuming six electrons in the process. The polypeptide is Cytochrome c-552 (Edwardsiella ictaluri (strain 93-146)).